A 292-amino-acid chain; its full sequence is Elongation factor Ts (292 aa).

The interval 79–82 (TDFV) is involved in Mg(2+) ion dislocation from EF-Tu.

The protein belongs to the EF-Ts family.

It is found in the cytoplasm. Its function is as follows. Associates with the EF-Tu.GDP complex and induces the exchange of GDP to GTP. It remains bound to the aminoacyl-tRNA.EF-Tu.GTP complex up to the GTP hydrolysis stage on the ribosome. This Xylella fastidiosa (strain 9a5c) protein is Elongation factor Ts.